The sequence spans 456 residues: High mobility group B protein 6 (456 aa).

Disordered stretches follow at residues 1–42 (MATN…KSAK), 117–142 (SSLT…KRPS), 238–258 (AEQD…PKHP), and 349–389 (MLKK…YFLF). Residues 11–21 (KKPRNSRKALK) are compositionally biased toward basic residues. Residues 138–206 (TKRPSSSYVL…AYLQVIAKEK (69 aa)) constitute a DNA-binding region (HMG box 1). Residues 240-254 (QDNKKKNKKEKDPLK) are compositionally biased toward basic and acidic residues. The HMG box 2 DNA-binding region spans 255–321 (PKHPVSAFLV…TYLQAMEEYK (67 aa)). Residues 354–363 (EKTDNLIKKE) are compositionally biased toward basic and acidic residues. Residues 379–447 (PKKPASSYFL…AYKKEVEAYN (69 aa)) constitute a DNA-binding region (HMG box 3).

It is found in the nucleus. The chain is High mobility group B protein 6 (HMGB6) from Arabidopsis thaliana (Mouse-ear cress).